Reading from the N-terminus, the 257-residue chain is Gamma-secretase subunit APH-1B (257 aa).

The next 7 helical transmembrane spans lie at 5–25 (VFFG…VFTI), 32–52 (IIFL…SSLV), 70–90 (YLLI…RFAY), 115–135 (LLAY…SFVN), 158–178 (YSAF…IVFF), 186–206 (WGIL…TFIS), and 213–233 (LASA…AAGG).

It belongs to the APH-1 family. In terms of assembly, probable component of the gamma-secretase complex, a complex composed of a presenilin homodimer (PSEN1 or PSEN2), nicastrin (NCSTN), APH1 (APH1A or APH1B) and PEN2. Such minimal complex is sufficient for secretase activity, although other components may exist. Interacts with PSEN1 and PSEN2.

The protein localises to the membrane. In terms of biological role, probable subunit of the gamma-secretase complex, an endoprotease complex that catalyzes the intramembrane cleavage of integral proteins such as Notch receptors and APP (amyloid-beta precursor protein). It probably represents a stabilizing cofactor for the presenilin homodimer that promotes the formation of a stable complex. Probably present in a minority of gamma-secretase complexes compared to APH1A. This chain is Gamma-secretase subunit APH-1B (APH1B), found in Pongo abelii (Sumatran orangutan).